The sequence spans 392 residues: 5-azacytidine-induced protein 2 (392 aa).

Residues 1–197 (MDALVEDDIC…IELQKAKQTD (197 aa)) form a homodimerization region. Coiled coils occupy residues 40-76 (ALVTAYEDIKKRLKDSEKENSLLKKRIRFLEEKLIAR) and 102-196 (DRDN…AKQT). Residues 216–257 (SDNMQHAYWELKREMSNLHLVTQVQAELLRKLKTSTAIKKAC) are interaction with TBK1 and IKBKE. 2 positions are modified to phosphoserine: serine 318 and serine 353.

In terms of assembly, homodimer. Interacts with IKBKE. Interacts with TBK1. Interacts with TICAM1. Interacts with TAX1BP1. Interacts with CALCOCO2. As to quaternary structure, (Microbial infection) Interacts with vaccinia virus protein C6. Ubiquitinated via 'Lys-48'-linked polyubiquitination by TRIM38, leading to its degradation. Widely expressed. Abundant expression seen in the pancreas and testis.

Its subcellular location is the cytoplasm. Adapter protein which binds TBK1 and IKBKE playing a role in antiviral innate immunity. Activates serine/threonine-protein kinase TBK1 and facilitates its oligomerization. Enhances the phosphorylation of NF-kappa-B p65 subunit RELA by TBK1. Promotes TBK1-induced as well as TNF-alpha or PMA-induced activation of NF-kappa-B. Participates in IFNB promoter activation via TICAM1. The protein is 5-azacytidine-induced protein 2 (AZI2) of Homo sapiens (Human).